Consider the following 114-residue polypeptide: Iron-sulfur cluster insertion protein ErpA (114 aa).

Positions 42, 106, and 108 each coordinate iron-sulfur cluster.

This sequence belongs to the HesB/IscA family. As to quaternary structure, homodimer. The cofactor is iron-sulfur cluster.

Required for insertion of 4Fe-4S clusters for at least IspG. The sequence is that of Iron-sulfur cluster insertion protein ErpA from Enterobacter sp. (strain 638).